Consider the following 374-residue polypeptide: Putative clathrin assembly protein At1g33340 (374 aa).

An ENTH domain is found at 30 to 163 (YNEKAFFDIE…GWIINQAGKL (134 aa)).

It is found in the membrane. The protein resides in the clathrin-coated pit. The protein localises to the golgi apparatus. Its subcellular location is the cytoplasmic vesicle. It localises to the clathrin-coated vesicle. The chain is Putative clathrin assembly protein At1g33340 from Arabidopsis thaliana (Mouse-ear cress).